We begin with the raw amino-acid sequence, 331 residues long: Glyceraldehyde-3-phosphate dehydrogenase, cytosolic (331 aa).

NAD(+) is bound by residues 12 to 13 (RI), Asp34, and Arg78. D-glyceraldehyde 3-phosphate contacts are provided by residues 149–151 (SCT), Thr180, 209–210 (TG), and Arg232. Catalysis depends on Cys150, which acts as the Nucleophile. Asn314 is a binding site for NAD(+).

Belongs to the glyceraldehyde-3-phosphate dehydrogenase family. Homotetramer.

It localises to the cytoplasm. The enzyme catalyses D-glyceraldehyde 3-phosphate + phosphate + NAD(+) = (2R)-3-phospho-glyceroyl phosphate + NADH + H(+). The protein operates within carbohydrate degradation; glycolysis; pyruvate from D-glyceraldehyde 3-phosphate: step 1/5. The protein is Glyceraldehyde-3-phosphate dehydrogenase, cytosolic of Trypanosoma brucei brucei.